We begin with the raw amino-acid sequence, 342 residues long: Endolytic peptidoglycan transglycosylase RlpA (342 aa).

Positions 1-26 (MSKRVRSSLILPAVCGLGLAAVLLSS) are cleaved as a signal peptide. Cysteine 27 carries the N-palmitoyl cysteine lipid modification. Residue cysteine 27 is the site of S-diacylglycerol cysteine attachment. The 82-residue stretch at 261–342 (SLPADGLYLQ…LGQPTLVRPD (82 aa)) folds into the SPOR domain.

This sequence belongs to the RlpA family.

The protein localises to the cell membrane. Its function is as follows. Lytic transglycosylase with a strong preference for naked glycan strands that lack stem peptides. In Pseudomonas aeruginosa (strain ATCC 15692 / DSM 22644 / CIP 104116 / JCM 14847 / LMG 12228 / 1C / PRS 101 / PAO1), this protein is Endolytic peptidoglycan transglycosylase RlpA.